We begin with the raw amino-acid sequence, 277 residues long: Inositol monophosphatase 1 (277 aa).

Residues E70, D90, I92, and D93 each coordinate Mg(2+). Substrate contacts are provided by residues E70, 90 to 95 (DPIDGT), 194 to 196 (GTA), E213, and D220. Position 220 (D220) interacts with Mg(2+).

Belongs to the inositol monophosphatase superfamily. In terms of assembly, homodimer. The cofactor is Mg(2+). Mostly expressed in brain, small intestine, testis, kidney, and spleen (at protein level).

The protein resides in the cytoplasm. It catalyses the reaction a myo-inositol phosphate + H2O = myo-inositol + phosphate. It carries out the reaction 1D-myo-inositol 1-phosphate + H2O = myo-inositol + phosphate. The catalysed reaction is 1D-myo-inositol 2-phosphate + H2O = myo-inositol + phosphate. The enzyme catalyses 1D-myo-inositol 3-phosphate + H2O = myo-inositol + phosphate. It catalyses the reaction 1D-myo-inositol 4-phosphate + H2O = myo-inositol + phosphate. It carries out the reaction 1D-myo-inositol 5-phosphate + H2O = myo-inositol + phosphate. The catalysed reaction is 1D-myo-inositol 6-phosphate + H2O = myo-inositol + phosphate. The enzyme catalyses scyllo-inositol 1-phosphate + H2O = scyllo-inositol + phosphate. It catalyses the reaction alpha-D-galactose 1-phosphate + H2O = D-galactose + phosphate. It carries out the reaction alpha-D-glucose 1-phosphate + H2O = D-glucose + phosphate. The catalysed reaction is D-glucose 6-phosphate + H2O = D-glucose + phosphate. The enzyme catalyses beta-D-fructose 1-phosphate + H2O = D-fructose + phosphate. It catalyses the reaction glycerol 2-phosphate + H2O = glycerol + phosphate. It carries out the reaction adenosine 2'-phosphate + H2O = adenosine + phosphate. The protein operates within polyol metabolism; myo-inositol biosynthesis; myo-inositol from D-glucose 6-phosphate: step 2/2. Inhibited by Li(+), Ca(2+) and Mn(2+), but also by Mg(2+) at concentrations above 3 mM. Phosphatase involved in the dephosphorylation of myo-inositol monophosphate to generate myo-inositol. Is also able to dephosphorylate scyllo-inositol-phosphate, myo-inositol 1,4-diphosphate, scyllo-inositol-1,3-diphosphate and scyllo-inositol-1,4-diphosphate. Also dephosphorylates in vitro other sugar-phosphates including D-galactose-1-phosphate, glucose-1-phosphate, glucose-6-phosphate, fructose-1-phosphate, beta-glycerophosphate and 2'-AMP. Responsible for the provision of inositol required for synthesis of phosphatidylinositol and polyphosphoinositides, and involved in maintaining normal brain function. Has been implicated as the pharmacological target for lithium Li(+) action in brain. The polypeptide is Inositol monophosphatase 1 (Impa1) (Mus musculus (Mouse)).